The sequence spans 436 residues: 3-ketoacyl-CoA thiolase (436 aa).

Residue Cys-99 is the Acyl-thioester intermediate of the active site. Catalysis depends on proton acceptor residues His-392 and Cys-422.

This sequence belongs to the thiolase-like superfamily. Thiolase family. In terms of assembly, heterotetramer of two alpha chains (FadJ) and two beta chains (FadI).

It localises to the cytoplasm. The catalysed reaction is an acyl-CoA + acetyl-CoA = a 3-oxoacyl-CoA + CoA. Its pathway is lipid metabolism; fatty acid beta-oxidation. Its function is as follows. Catalyzes the final step of fatty acid oxidation in which acetyl-CoA is released and the CoA ester of a fatty acid two carbons shorter is formed. The chain is 3-ketoacyl-CoA thiolase from Yersinia pseudotuberculosis serotype O:1b (strain IP 31758).